The chain runs to 1019 residues: Limulus clotting factor C (1019 aa).

The first 25 residues, 1–25 (MVLASFLVSGLVLGLLAQKMRPVQS), serve as a signal peptide directing secretion. The EGF-like domain occupies 102 to 137 (YGTWCSGECQCKNGGICDQRTGACACRDRYEGVHCE). Intrachain disulfides connect Cys-106-Cys-118, Cys-112-Cys-125, Cys-127-Cys-136, Cys-142-Cys-182, Cys-168-Cys-195, Cys-199-Cys-241, Cys-227-Cys-254, Cys-260-Cys-308, Cys-294-Cys-321, Cys-331-Cys-350, Cys-354-Cys-374, Cys-436-Cys-447, Cys-464-Cys-564, Cys-538-Cys-556, Cys-576-Cys-621, Cys-607-Cys-634, and Cys-720-Cys-748. 3 consecutive Sushi domains span residues 140-197 (KGCP…KCIR), 198-256 (ECAM…QCKN), and 258-323 (VFCP…SCVK). Residues 325–421 (ADREVDCDSK…EELKSLARSF (97 aa)) enclose the LCCL domain. Positions 436–568 (CPDGWFEVDE…PSSFACMMDL (133 aa)) constitute a C-type lectin domain. Residues Asn-523 and Asn-534 are each glycosylated (N-linked (GlcNAc...) asparagine). 2 Sushi domains span residues 574 to 636 (AKCD…RCIK) and 689 to 750 (PRSS…SCIP). Residues Asn-624, Asn-740, and Asn-767 are each glycosylated (N-linked (GlcNAc...) asparagine). One can recognise a Peptidase S1 domain in the interval 763–1019 (IWNGNSTEIG…VFLSWIRQFI (257 aa)). The cysteines at positions 794 and 810 are disulfide-linked. Active-site charge relay system residues include His-809 and Asp-865. An N-linked (GlcNAc...) asparagine glycan is attached at Asn-912. Cys-932 and Cys-951 are oxidised to a cystine. Substrate is bound at residue Asp-960. Cys-962 and Cys-996 are oxidised to a cystine. Catalysis depends on Ser-966, which acts as the Charge relay system.

It belongs to the peptidase S1 family. Heterodimer of a light chain and a heavy chain linked by a disulfide bond.

It is found in the secreted. The enzyme catalyses Selective cleavage of 103-Arg-|-Ser-104 and 124-Ile-|-Ile-125 bonds in Limulus clotting factor B to form activated factor B. Cleavage of -Pro-Arg-|-Xaa- bonds in synthetic substrates.. With respect to regulation, activated by Gram-negative bacterial lipopolysaccharides and chymotrypsin. This enzyme is closely associated with an endotoxin-sensitive hemolymph coagulation system which may play important roles in both hemostasis and host defense mechanisms. Its active form catalyzes the activation of factor B. The chain is Limulus clotting factor C from Carcinoscorpius rotundicauda (Mangrove horseshoe crab).